The following is a 64-amino-acid chain: Conotoxin Cal6.24 (64 aa).

The first 22 residues, 1–22, serve as a signal peptide directing secretion; it reads MKLTCVMIVAVLVLTVCKVVTS. Cystine bridges form between Cys-32–Cys-50, Cys-40–Cys-54, and Cys-49–Cys-60.

In terms of tissue distribution, expressed by the venom duct.

The protein localises to the secreted. Its function is as follows. Probable neurotoxin. The polypeptide is Conotoxin Cal6.24 (Californiconus californicus (California cone)).